The chain runs to 618 residues: DNA mismatch repair protein MutL (618 aa).

Residues 367-378 (EPTAAREPATPR) show a composition bias toward low complexity. The interval 367 to 402 (EPTAAREPATPRYSGGASGGNGGRQTAGGWPHAQPG) is disordered. The segment covering 382-392 (GASGGNGGRQT) has biased composition (gly residues).

The protein belongs to the DNA mismatch repair MutL/HexB family.

This protein is involved in the repair of mismatches in DNA. It is required for dam-dependent methyl-directed DNA mismatch repair. May act as a 'molecular matchmaker', a protein that promotes the formation of a stable complex between two or more DNA-binding proteins in an ATP-dependent manner without itself being part of a final effector complex. This chain is DNA mismatch repair protein MutL, found in Salmonella choleraesuis (strain SC-B67).